An 882-amino-acid chain; its full sequence is DNA mismatch repair protein MutS (882 aa).

An ATP-binding site is contributed by 656-663 (GPNASGKS).

This sequence belongs to the DNA mismatch repair MutS family.

This protein is involved in the repair of mismatches in DNA. It is possible that it carries out the mismatch recognition step. This protein has a weak ATPase activity. In Synechococcus elongatus (strain ATCC 33912 / PCC 7942 / FACHB-805) (Anacystis nidulans R2), this protein is DNA mismatch repair protein MutS.